Here is a 1353-residue protein sequence, read N- to C-terminus: ABC-type transporter MYCGRDRAFT_41235 (1353 aa).

The chain crosses the membrane as a helical span at residues 40–60 (ASASLWNWFFFSWLNPLIAIG). N-linked (GlcNAc...) asparagine glycosylation occurs at Asn121. The next 6 helical transmembrane spans lie at 124–144 (VLVW…ATIT), 172–192 (IGQG…GVMA), 250–270 (FACG…ICLG), 271–291 (LTIA…AILV), 364–384 (VALS…TYAA), and 397–417 (ALTL…AFGA). In terms of domain architecture, ABC transmembrane type-1 1 spans 129–420 (WVGGAMKLFA…LPVAFGAAAD (292 aa)). The ABC transporter 1 domain occupies 460–684 (YRVQDHSDEK…EGGQMRRVVE (225 aa)). An N-linked (GlcNAc...) asparagine glycan is attached at Asn481. ATP is bound at residue 496–503 (GPVGAGKS). The interval 687-720 (ASKSSAEEEEVEDGDLKDGVPSTDGGDASQTTSN) is disordered. Transmembrane regions (helical) follow at residues 748 to 768 (PAFT…GSIL), 796 to 816 (LGVS…FFIF), 864 to 882 (AFRM…VVLI), 888 to 907 (WFLL…GMYY), 973 to 993 (LSVR…LIVV), and 1002 to 1022 (AQGG…GFMI). The ABC transmembrane type-1 2 domain occupies 756-1030 (ILSMLIFQGG…MIRQSAEIEN (275 aa)). The ABC transporter 2 domain occupies 1070 to 1334 (IEMRDVVFTH…EGGHFRSLCS (265 aa)). Residue 1104 to 1111 (GRTGSGKS) participates in ATP binding. The segment covering 1191 to 1200 (QSSAETLTSS) has biased composition (polar residues). A disordered region spans residues 1191–1223 (QSSAETLTSSDQEKSSPDDAAISPSSHSHSQHL). Over residues 1208 to 1218 (DDAAISPSSHS) the composition is skewed to low complexity.

Belongs to the ABC transporter superfamily. ABCC family. Conjugate transporter (TC 3.A.1.208) subfamily.

It localises to the cell membrane. In terms of biological role, multidrug resistance protein; part of the gene cluster 14 that mediates the biosynthesis of a ferrichrome A-like siderophors which may contribute to organismal virulence. In Zymoseptoria tritici (strain CBS 115943 / IPO323) (Speckled leaf blotch fungus), this protein is ABC-type transporter MYCGRDRAFT_41235.